Consider the following 207-residue polypeptide: Heat shock protein beta-1 (207 aa).

Omega-N-methylarginine is present on Arg-12. Residue Ser-13 is modified to Phosphoserine. Ser-15 is subject to Phosphoserine; by MAPKAPK2 and MAPKAPK3. A Phosphoserine modification is found at Ser-27. The segment at 72-207 is interaction with TGFB1I1; it reads APAYSRLLSR…AGKSEKPGTK (136 aa). One can recognise a sHSP domain in the interval 78 to 186; sequence LLSRQLSSGV…QSAEITIPVT (109 aa). A phosphoserine; by MAPKAPK2, MAPKAPK3 and MAPKAPK5 mark is found at Ser-80 and Ser-84. A phosphoserine mark is found at Ser-85, Ser-88, and Ser-100. The residue at position 125 (Lys-125) is an N6-acetyllysine. The tract at residues 151–181 is disordered; it reads DPTQVSSSLSPEGTLSVEAPLPKPATQSAEI. Polar residues predominate over residues 153-163; it reads TQVSSSLSPEG. Thr-176 carries the post-translational modification Phosphothreonine. Phosphoserine is present on residues Ser-178 and Ser-201.

It belongs to the small heat shock protein (HSP20) family. As to quaternary structure, homooligomer. Homodimer; becomes monomeric upon activation. Heterooligomer; with HSPB6. Associates with alpha- and beta-tubulin. Interacts with TGFB1I1. Interacts with CRYAB. Interacts with HSPB8. Interacts with HSPBAP1. In terms of processing, phosphorylated upon exposure to protein kinase C activators and heat shock. Phosphorylation by MAPKAPK2 and MAPKAPK3 in response to stress dissociates HSPB1 from large small heat-shock protein (sHsps) oligomers and impairs its chaperone activity and ability to protect against oxidative stress effectively. Phosphorylation by MAPKAPK5 in response to PKA stimulation induces F-actin rearrangement.

The protein localises to the cytoplasm. Its subcellular location is the nucleus. It localises to the cytoskeleton. The protein resides in the spindle. Small heat shock protein which functions as a molecular chaperone probably maintaining denatured proteins in a folding-competent state. Plays a role in stress resistance and actin organization. Through its molecular chaperone activity may regulate numerous biological processes including the phosphorylation and the axonal transport of neurofilament proteins. The protein is Heat shock protein beta-1 (HSPB1) of Sus scrofa (Pig).